The sequence spans 137 residues: Endoribonuclease YbeY (137 aa).

Zn(2+)-binding residues include histidine 107, histidine 111, and aspartate 117.

This sequence belongs to the endoribonuclease YbeY family. It depends on Zn(2+) as a cofactor.

It localises to the cytoplasm. Functionally, single strand-specific metallo-endoribonuclease involved in late-stage 70S ribosome quality control and in maturation of the 3' terminus of the 16S rRNA. This chain is Endoribonuclease YbeY, found in Bacteroides thetaiotaomicron (strain ATCC 29148 / DSM 2079 / JCM 5827 / CCUG 10774 / NCTC 10582 / VPI-5482 / E50).